The following is a 456-amino-acid chain: DnaJ homolog dnj-10 (456 aa).

Positions aspartate 44–glycine 108 constitute a J domain. A CR-type zinc finger spans residues glycine 178–arginine 257. 3 CXXCXGXG motif repeats span residues cysteine 208 to glycine 215, cysteine 231 to glycine 238, and cysteine 245 to glycine 252. Residues lysine 395–proline 429 are compositionally biased toward basic and acidic residues. The segment at lysine 395–asparagine 443 is disordered.

This chain is DnaJ homolog dnj-10 (dnj-10), found in Caenorhabditis elegans.